Here is a 362-residue protein sequence, read N- to C-terminus: MAHHDPINLMTPPAGLAQLNERSREIFRQIVESYLATGEPVGSRNISRLIAVPLSPASVRNVMADLEQLGLIYAPHTSAGRLPTEAGLRFFVDALMQVGDMTEAERQSIQSQLASVGRAQSVEAALDEALTRLSGLTRAAAVVLTAKSNTRLKHIEFVRLEPERALVVLVGEDGQVENRVLALPPGVPSSALTEASNFLNARIRGRTLAEARLELETALAHDRAELDQLTQKVIAAGVASWSGGDSDDRQLIVRGHANLLEDLHALEDLERVRRLFDDLETKRGVVDLLGRAENADGVRIFIGSENKLFSLSGSSTIVSPYSDATGRIVGVLGVIGPTRLNYARVIPTVDYAARLVSRLLGG.

The protein belongs to the HrcA family.

Negative regulator of class I heat shock genes (grpE-dnaK-dnaJ and groELS operons). Prevents heat-shock induction of these operons. This chain is Heat-inducible transcription repressor HrcA, found in Bradyrhizobium sp. (strain BTAi1 / ATCC BAA-1182).